Consider the following 391-residue polypeptide: MAKGKFERTKPHVNIGTIGHVDHGKTSLTAAITKYFGEFKAYDQIDAAPEEKARGITISTAHVEYETENRHYAHVDCPGHADYVKNMITGAAQMDGAILVVSAADGPMPQTREHILLARQVGVPAIVVFLNKVDQVDDPELLELVELEIRELLSKYEFPGDDIPIVKGSALAALEDSNKEIGEDAVRQLMAEVDKYIPTPERPIDQPFLMPIEDVFSISGRGTVVTGRVERGVVKVGEEVEIVGIRPTSKTTVTGVEMFRKLLDQGQAGDNIGALLRGIDREGVERGQVLAKPGSVTPHTKFKAEAYILTKEEGGRHTPFFTNYRPQFYFRTTDVTGVVTLPEGTEMVMPGDNVTMDVTLIVPIAMEERLRFAIREGGRTVGAGIVASITE.

The region spanning 10-201 (KPHVNIGTIG…EVDKYIPTPE (192 aa)) is the tr-type G domain. The tract at residues 19–26 (GHVDHGKT) is G1. 19–26 (GHVDHGKT) lines the GTP pocket. Thr26 lines the Mg(2+) pocket. The segment at 55-59 (GITIS) is G2. The segment at 76–79 (DCPG) is G3. GTP-binding positions include 76 to 80 (DCPGH) and 131 to 134 (NKVD). The interval 131–134 (NKVD) is G4. The tract at residues 169-171 (SAL) is G5.

This sequence belongs to the TRAFAC class translation factor GTPase superfamily. Classic translation factor GTPase family. EF-Tu/EF-1A subfamily. As to quaternary structure, monomer.

The protein resides in the cytoplasm. It carries out the reaction GTP + H2O = GDP + phosphate + H(+). GTP hydrolase that promotes the GTP-dependent binding of aminoacyl-tRNA to the A-site of ribosomes during protein biosynthesis. The sequence is that of Elongation factor Tu from Chelativorans sp. (strain BNC1).